The sequence spans 362 residues: Cap-specific mRNA (nucleoside-2'-O-)-methyltransferase 1 (362 aa).

A RrmJ-type SAM-dependent 2'-O-MTase domain is found at 87–294 (SFGNRAGHKL…ERYLVCLGFL (208 aa)). S-adenosyl-L-methionine is bound by residues Gly-130 and Asp-207. Lys-248 serves as the catalytic Proton acceptor.

Its subcellular location is the nucleus. It carries out the reaction a 5'-end (N(7)-methyl 5'-triphosphoguanosine)-ribonucleoside in mRNA + S-adenosyl-L-methionine = a 5'-end (N(7)-methyl 5'-triphosphoguanosine)-(2'-O-methyl-ribonucleoside) in mRNA + S-adenosyl-L-homocysteine + H(+). In terms of biological role, S-adenosyl-L-methionine-dependent methyltransferase that mediates RNA cap1 2'-O-ribose methylation to the 5'-cap structure of spliced leader and U1 small nuclear RNAs. Methylates the ribose of the first nucleotide of a m(7)GpppG-capped RNA to produce m(7)GpppNmp (cap1). Cap1 modification is linked to higher levels of translation. Recognizes a guanosine cap on RNA independent of its N(7) methylation status. In Trypanosoma cruzi (strain CL Brener), this protein is Cap-specific mRNA (nucleoside-2'-O-)-methyltransferase 1.